We begin with the raw amino-acid sequence, 184 residues long: Translocon-associated protein subunit beta (184 aa).

An N-terminal signal peptide occupies residues 1–20; the sequence is MNFKTVISLFLVLFVSFVYC. Residues 21-147 are Lumenal-facing; sequence ENGAELLFHK…SQADYEKRTS (127 aa). N94 carries an N-linked (GlcNAc...) asparagine glycan. Residues 148–168 form a helical membrane-spanning segment; sequence LLIKEWITFFVLCAGAIALPY. The Cytoplasmic portion of the chain corresponds to 169–184; it reads SISTYYKKNYENGIKK.

This sequence belongs to the TRAP-beta family. In terms of assembly, heterotrimer of TRAP-alpha, TRAP-beta and TRAP-gamma.

Its subcellular location is the endoplasmic reticulum membrane. Functionally, TRAP proteins are part of a complex whose function is to bind calcium to the ER membrane and thereby regulate the retention of ER resident proteins. This Dictyostelium discoideum (Social amoeba) protein is Translocon-associated protein subunit beta (ssr2).